We begin with the raw amino-acid sequence, 90 residues long: Long neurotoxin 7 (90 aa).

The first 21 residues, 1 to 21 (MKTLLLTLVLVTIMCLDLGYT), serve as a signal peptide directing secretion. 5 disulfides stabilise this stretch: Cys24-Cys41, Cys35-Cys62, Cys47-Cys51, Cys66-Cys77, and Cys78-Cys83.

Belongs to the three-finger toxin family. Long-chain subfamily. Type II alpha-neurotoxin sub-subfamily. As to expression, expressed by the venom gland.

The protein resides in the secreted. Its function is as follows. Binds with high affinity to muscular (alpha-1/CHRNA1) and neuronal (alpha-7/CHRNA7) nicotinic acetylcholine receptor (nAChR) and inhibits acetylcholine from binding to the receptor, thereby impairing neuromuscular and neuronal transmission. This chain is Long neurotoxin 7, found in Naja sputatrix (Malayan spitting cobra).